Here is an 895-residue protein sequence, read N- to C-terminus: Tiger protein D1 (895 aa).

The N-terminal stretch at 1–21 (MIHKMYFFLILLFSLFIIVYS) is a signal peptide. At 22-861 (APNRVTRNET…ERKSSKLSGG (840 aa)) the chain is on the extracellular side. 27 N-linked (GlcNAc...) asparagine glycosylation sites follow: Asn-29, Asn-52, Asn-171, Asn-181, Asn-253, Asn-257, Asn-277, Asn-288, Asn-351, Asn-368, Asn-407, Asn-428, Asn-451, Asn-481, Asn-507, Asn-521, Asn-573, Asn-583, Asn-593, Asn-623, Asn-652, Asn-685, Asn-720, Asn-757, Asn-766, Asn-780, and Asn-799. An IPT/TIG 1 domain is found at 295-381 (AVISSISSVS…SGSDAVTFTY (87 aa)). 2 consecutive IPT/TIG domains span residues 560 to 638 (PKVE…SFYL) and 642 to 725 (PVIY…TLTY). The chain crosses the membrane as a helical span at residues 862–882 (AIAGITIGCVAGAGALVGSVF). Topologically, residues 883 to 895 (YFKLITRVKKAFN) are cytoplasmic.

It localises to the cell membrane. Functionally, may be involved in the regulation of aggregation. Activates tgrC1. The sequence is that of Tiger protein D1 (tgrD1) from Dictyostelium discoideum (Social amoeba).